The sequence spans 62 residues: Small ribosomal subunit protein eS27 (62 aa).

4 residues coordinate Zn(2+): cysteine 17, cysteine 20, cysteine 36, and cysteine 39. The C4-type zinc finger occupies 17–39; that stretch reads CPDCENEQTIFDRACTPVDCIVC.

It belongs to the eukaryotic ribosomal protein eS27 family. As to quaternary structure, part of the 30S ribosomal subunit. The cofactor is Zn(2+).

The protein is Small ribosomal subunit protein eS27 of Methanospirillum hungatei JF-1 (strain ATCC 27890 / DSM 864 / NBRC 100397 / JF-1).